A 627-amino-acid polypeptide reads, in one-letter code: tRNA uridine 5-carboxymethylaminomethyl modification enzyme MnmG (627 aa).

FAD contacts are provided by residues 13–18 (GGGHAG), V125, and S180. NAD(+) is bound at residue 274 to 288 (GPRYCPSIEDKVVRF). FAD is bound at residue Q371.

It belongs to the MnmG family. In terms of assembly, homodimer. Heterotetramer of two MnmE and two MnmG subunits. FAD serves as cofactor.

It localises to the cytoplasm. Functionally, NAD-binding protein involved in the addition of a carboxymethylaminomethyl (cmnm) group at the wobble position (U34) of certain tRNAs, forming tRNA-cmnm(5)s(2)U34. The chain is tRNA uridine 5-carboxymethylaminomethyl modification enzyme MnmG from Francisella tularensis subsp. holarctica (strain FTNF002-00 / FTA).